Reading from the N-terminus, the 772-residue chain is Ion-translocating oxidoreductase complex subunit C (772 aa).

4Fe-4S ferredoxin-type domains are found at residues 369-397 (GEPQ…QQLY) and 407-436 (KATT…VQYF). [4Fe-4S] cluster-binding residues include Cys377, Cys380, Cys383, Cys387, Cys416, Cys419, Cys422, and Cys426. The disordered stretch occupies residues 599 to 748 (KARKLEQQQA…EPEEQVDPRK (150 aa)).

This sequence belongs to the 4Fe4S bacterial-type ferredoxin family. RnfC subfamily. In terms of assembly, the complex is composed of six subunits: RsxA, RsxB, RsxC, RsxD, RsxE and RsxG. Requires [4Fe-4S] cluster as cofactor.

Its subcellular location is the cell inner membrane. Functionally, part of a membrane-bound complex that couples electron transfer with translocation of ions across the membrane. Required to maintain the reduced state of SoxR. The chain is Ion-translocating oxidoreductase complex subunit C from Shigella dysenteriae serotype 1 (strain Sd197).